Reading from the N-terminus, the 125-residue chain is MARIAGVDLPREKKVEIGLTYIFGIGRKTAQKILEASGVSSAQRVRDLNDNDLNKLRQEIERNHRVEGALRTEVAMNIKRLMDIGSYRGTRHRRGLPVRGQRTHTNARTKKGPRRAIAGKKKVTK.

The segment at Thr-90–Lys-125 is disordered.

This sequence belongs to the universal ribosomal protein uS13 family. Part of the 30S ribosomal subunit. Forms a loose heterodimer with protein S19. Forms two bridges to the 50S subunit in the 70S ribosome.

Functionally, located at the top of the head of the 30S subunit, it contacts several helices of the 16S rRNA. In the 70S ribosome it contacts the 23S rRNA (bridge B1a) and protein L5 of the 50S subunit (bridge B1b), connecting the 2 subunits; these bridges are implicated in subunit movement. Contacts the tRNAs in the A and P-sites. The sequence is that of Small ribosomal subunit protein uS13 from Gemmatimonas aurantiaca (strain DSM 14586 / JCM 11422 / NBRC 100505 / T-27).